A 603-amino-acid polypeptide reads, in one-letter code: UvrABC system protein C (603 aa).

The GIY-YIG domain maps to 14–92 (ELPGVYRMLD…IKSLAPRYNI (79 aa)). Positions 201 to 236 (QEVTRRLTKSMEEASAKLAFEQAAVFRDQIQSLHQV) constitute a UVR domain.

The protein belongs to the UvrC family. Interacts with UvrB in an incision complex.

The protein resides in the cytoplasm. Functionally, the UvrABC repair system catalyzes the recognition and processing of DNA lesions. UvrC both incises the 5' and 3' sides of the lesion. The N-terminal half is responsible for the 3' incision and the C-terminal half is responsible for the 5' incision. This is UvrABC system protein C from Dechloromonas aromatica (strain RCB).